The primary structure comprises 559 residues: MVIPWCSSMMRLLWFLFALLLARSVADAATANYTFTVESMRVSRLCNSTDIIAVNGLLPGPMIEVNEGDAVAVEVINGSPYNLTIHWHGILQLLTPWADGPSMVTQCPIQPNSSYTYRFNVTGQEGTLWWHAHSSFLRATVYGALIIRPRNGSAYPFPAPDQEVPIVLGEWWSRNVVDIESDAVSSGQLPRESDAFTVNGVTGELYQCANDTFTVDVQPNTTVLLRVINAGLNTHLFFKVAGHAFTVVAVDACYTANYTTDTLVLAPGHTVDALMVTNASAGSYYMAVQAYDSLSPTTMAVTDDTTATAIVHYNTTSTKKNATPVMPTMPQSSDSATANAFYFGLRGPPSPSAPAVPTKVDVNMTIELGLGQLPCDSTQSSCSGKSVAAAMNGVSFRLPSQMSLLEAQFNRTPGVYTADFPDAPQPSGTPMVEGTKVRRLKYNSTVEIVLQNPTAFPSENHPIHLHGFNFFVLAQGLGNFTPGNVSGYNLVDPVSRNTLAVPTGGWAVIRFVANNPGMWFFHCHLDAHVPMGLGMVFAVDNGTTPDSFLPPPPADLPKC.

The first 28 residues, 1-28 (MVIPWCSSMMRLLWFLFALLLARSVADA), serve as a signal peptide directing secretion. N-linked (GlcNAc...) asparagine glycosylation is found at asparagine 32, asparagine 47, and asparagine 82. 2 Plastocyanin-like domains span residues 36–152 (TVES…PRNG) and 163–316 (EVPI…YNTT). The Cu cation site is built by histidine 86 and histidine 88. 2 N-linked (GlcNAc...) asparagine glycosylation sites follow: asparagine 112 and asparagine 120. Residues histidine 131 and histidine 133 each coordinate Cu cation. 8 N-linked (GlcNAc...) asparagine glycosylation sites follow: asparagine 151, asparagine 210, asparagine 220, asparagine 257, asparagine 278, asparagine 314, asparagine 363, and asparagine 443. The 148-residue stretch at 396 to 543 (FRLPSQMSLL…GMVFAVDNGT (148 aa)) folds into the Plastocyanin-like 3 domain. Cu cation is bound by residues histidine 461, histidine 464, and histidine 466. Asparagine 484 carries an N-linked (GlcNAc...) asparagine glycan. Histidine 522, cysteine 523, histidine 524, and histidine 528 together coordinate Cu cation. N-linked (GlcNAc...) asparagine glycosylation occurs at asparagine 541.

It belongs to the multicopper oxidase family. Requires Cu cation as cofactor.

It localises to the secreted. It is found in the extracellular space. The protein resides in the apoplast. It catalyses the reaction 4 hydroquinone + O2 = 4 benzosemiquinone + 2 H2O. In terms of biological role, lignin degradation and detoxification of lignin-derived products. The chain is Laccase-7 (LAC7) from Oryza sativa subsp. japonica (Rice).